The following is a 330-amino-acid chain: Phosphate acyltransferase (330 aa).

The protein belongs to the PlsX family. As to quaternary structure, homodimer. Probably interacts with PlsY.

The protein localises to the cytoplasm. The enzyme catalyses a fatty acyl-[ACP] + phosphate = an acyl phosphate + holo-[ACP]. The protein operates within lipid metabolism; phospholipid metabolism. Catalyzes the reversible formation of acyl-phosphate (acyl-PO(4)) from acyl-[acyl-carrier-protein] (acyl-ACP). This enzyme utilizes acyl-ACP as fatty acyl donor, but not acyl-CoA. In Lactobacillus delbrueckii subsp. bulgaricus (strain ATCC BAA-365 / Lb-18), this protein is Phosphate acyltransferase.